Here is a 142-residue protein sequence, read N- to C-terminus: Large ribosomal subunit protein uL13 (142 aa).

The protein belongs to the universal ribosomal protein uL13 family. In terms of assembly, part of the 50S ribosomal subunit.

Its function is as follows. This protein is one of the early assembly proteins of the 50S ribosomal subunit, although it is not seen to bind rRNA by itself. It is important during the early stages of 50S assembly. This Stutzerimonas stutzeri (strain A1501) (Pseudomonas stutzeri) protein is Large ribosomal subunit protein uL13.